A 736-amino-acid chain; its full sequence is MNSQLSLSTIQSLVDGSVANPGSLLGRHPVNYRGREATSVRVLEPNAESVWLIDSASGLRRPMRRLHPGGFFEAICDEPITKPSTSRLQMIDKTGKEIKTTSPYTVPSIFSDLDRYLIGEGRHNQLYERLGAQLREVDGVKGVNFAVWAPNARSVQVVGDFNGWDGRGHVAQPVESTGIWELFLPGATVGQKYKFRIQTQHGHWMDKCDPMAFAAELPPLTANIITDINTYSWNDSDWLQQRAEMDPMHTPMNVYEVHLGSWQKGPGRTHGWLDYRDLAKRLVDYCHRMNFTHVELMPISEHPFTGSWGYQSVGYYAPTSRHGSPEDFMFFVDHMHQNGIGVLIDWVPAHFPKDDHGLRQFDGSALYEHADPRQGEHPDWGTMIFNFGRNEVKNFLIANALFWLDKYHIDGLRVDAVASMLYLDYSREDGEWIPNRYGGRENLESIDFLRDFNIAVHENHPGVITAAEESTAWPGVSRPTYDGGLGFTYKWNMGWMNDTLSYMRNEPIHRKFHQNELTFSLIYAFTENFTLPLSHDEVVHGKGSLISQMPGDMWQKFANLRLLYSYMWTHPGKKLLFMGGEIAQWTEWNADDGPQWELLDFDTHRGVQQLVADLNKVVIENPALHWHDFTGDGFEWIDAHNAEDSVLVYLRKGAEGDPPILVCNNFTPVPRDNYRVGVPAQGFWKEIFNSDGEAYGGSNLGNYPGCQTTGIEHHARPDSIEVTLPPLGTTILRLES.

The active-site Nucleophile is D415. Residue E468 is the Proton donor of the active site.

Belongs to the glycosyl hydrolase 13 family. GlgB subfamily. In terms of assembly, monomer.

The enzyme catalyses Transfers a segment of a (1-&gt;4)-alpha-D-glucan chain to a primary hydroxy group in a similar glucan chain.. The protein operates within glycan biosynthesis; glycogen biosynthesis. Its function is as follows. Catalyzes the formation of the alpha-1,6-glucosidic linkages in glycogen by scission of a 1,4-alpha-linked oligosaccharide from growing alpha-1,4-glucan chains and the subsequent attachment of the oligosaccharide to the alpha-1,6 position. The polypeptide is 1,4-alpha-glucan branching enzyme GlgB (Rhodopirellula baltica (strain DSM 10527 / NCIMB 13988 / SH1)).